Consider the following 267-residue polypeptide: Small ribosomal subunit protein uS2 (267 aa).

Residues 233-250 (RAESDKAETDKVEVEGKG) show a composition bias toward basic and acidic residues. Positions 233–267 (RAESDKAETDKVEVEGKGEAPAAEAAEVVESADKA) are disordered. The span at 251-261 (EAPAAEAAEVV) shows a compositional bias: low complexity.

It belongs to the universal ribosomal protein uS2 family.

This chain is Small ribosomal subunit protein uS2, found in Syntrophotalea carbinolica (strain DSM 2380 / NBRC 103641 / GraBd1) (Pelobacter carbinolicus).